The following is a 442-amino-acid chain: Probable 6-phospho-beta-glucosidase (442 aa).

NAD(+) is bound at residue 5 to 73 (LKIVTIGGGS…VPIDIHLTLD (69 aa)). R96 and N150 together coordinate substrate. The Mn(2+) site is built by C172 and H202. Y256 (proton acceptor) is an active-site residue.

It belongs to the glycosyl hydrolase 4 family. NAD(+) is required as a cofactor. Requires a divalent metal cation as cofactor.

The catalysed reaction is 6-phospho-beta-D-glucosyl-(1-&gt;4)-D-glucose + H2O = D-glucose 6-phosphate + D-glucose. Its function is as follows. Hydrolyzes phospho-beta-glucosides. In Bacillus subtilis (strain 168), this protein is Probable 6-phospho-beta-glucosidase (licH).